The chain runs to 369 residues: 3-isopropylmalate dehydrogenase (369 aa).

76–89 (GPKWDRNPSHLRPE) provides a ligand contact to NAD(+). R96, R106, R134, and D223 together coordinate substrate. Positions 223, 247, and 251 each coordinate Mg(2+). 281–293 (GSAPDIAGQNKAN) is a binding site for NAD(+).

It belongs to the isocitrate and isopropylmalate dehydrogenases family. LeuB type 1 subfamily. As to quaternary structure, homodimer. Mg(2+) is required as a cofactor. The cofactor is Mn(2+).

Its subcellular location is the cytoplasm. It catalyses the reaction (2R,3S)-3-isopropylmalate + NAD(+) = 4-methyl-2-oxopentanoate + CO2 + NADH. It functions in the pathway amino-acid biosynthesis; L-leucine biosynthesis; L-leucine from 3-methyl-2-oxobutanoate: step 3/4. Its function is as follows. Catalyzes the oxidation of 3-carboxy-2-hydroxy-4-methylpentanoate (3-isopropylmalate) to 3-carboxy-4-methyl-2-oxopentanoate. The product decarboxylates to 4-methyl-2 oxopentanoate. The protein is 3-isopropylmalate dehydrogenase (leuB) of Priestia megaterium (strain DSM 319 / IMG 1521) (Bacillus megaterium).